Here is a 466-residue protein sequence, read N- to C-terminus: Soluble pyridine nucleotide transhydrogenase (466 aa).

36–45 (ERYNNVGGGC) is an FAD binding site.

It belongs to the class-I pyridine nucleotide-disulfide oxidoreductase family. FAD serves as cofactor.

The protein localises to the cytoplasm. It carries out the reaction NAD(+) + NADPH = NADH + NADP(+). Functionally, conversion of NADPH, generated by peripheral catabolic pathways, to NADH, which can enter the respiratory chain for energy generation. This Yersinia pseudotuberculosis serotype O:1b (strain IP 31758) protein is Soluble pyridine nucleotide transhydrogenase.